The sequence spans 81 residues: Photosystem I iron-sulfur center (81 aa).

4Fe-4S ferredoxin-type domains are found at residues 2–31 (AHSV…MVPW) and 39–68 (IASA…VRVY). Positions 11, 14, 17, 21, 48, 51, 54, and 58 each coordinate [4Fe-4S] cluster.

As to quaternary structure, the eukaryotic PSI reaction center is composed of at least 11 subunits. [4Fe-4S] cluster serves as cofactor.

Its subcellular location is the plastid. The protein localises to the chloroplast thylakoid membrane. The catalysed reaction is reduced [plastocyanin] + hnu + oxidized [2Fe-2S]-[ferredoxin] = oxidized [plastocyanin] + reduced [2Fe-2S]-[ferredoxin]. In terms of biological role, apoprotein for the two 4Fe-4S centers FA and FB of photosystem I (PSI); essential for photochemical activity. FB is the terminal electron acceptor of PSI, donating electrons to ferredoxin. The C-terminus interacts with PsaA/B/D and helps assemble the protein into the PSI complex. Required for binding of PsaD and PsaE to PSI. PSI is a plastocyanin-ferredoxin oxidoreductase, converting photonic excitation into a charge separation, which transfers an electron from the donor P700 chlorophyll pair to the spectroscopically characterized acceptors A0, A1, FX, FA and FB in turn. The sequence is that of Photosystem I iron-sulfur center from Gnetum gnemon (Spanish joint-fir).